The following is a 370-amino-acid chain: Peptidyl-prolyl cis-trans isomerase D (370 aa).

The residue at position 5 (Ser-5) is a Phosphoserine. The PPIase cyclophilin-type domain occupies 19-183 (FFDVDIGGER…KLCVIAECGE (165 aa)). The residue at position 171 (Lys-171) is an N6-acetyllysine. The chaperone activity stretch occupies residues 185 to 215 (KEGDDWGIFPKDGSGDSHPDFPEDADIDLKD). Ser-198 carries the phosphoserine modification. Residues 214 to 370 (KDVDKILLIS…EKAVYAKMFA (157 aa)) are interaction with HSP90AB1. TPR repeat units lie at residues 223 to 256 (SEDLKNIGNTFFKSQNWEMAIKKYAKVLRYVDSS), 273 to 306 (LSCVLNIGACKLKMSNWQGAIDSCLEALEMDPSN), and 307 to 340 (TKALYRKAQGWQGLKEYDQALADLKKAQEIAPGD).

The protein belongs to the cyclophilin-type PPIase family. PPIase D subfamily. In terms of assembly, identified in ESR1 or NR3C1/GCR steroid receptor-chaperone complexes. Found in HSP90 chaperone complexes with kinase clients LCK or EIF2AK1. Two monomers associate with one HSP90 homodimer. Interacts with HSP90AA1. Interacts with HSP90AB1; PPID and FKBP4 compete for binding to HSP90AB1 and the interaction is mutually exclusive with the PPID:HSPA8 interaction. Interacts with HSPA8; PPID and STIP1 but not FKBP4 compete for binding to HSPA8 and the interaction is mutually exclusive with the PPID:HSP90AB1 interaction. Interacts with S100A1 and S100A2; the interactions dissociate the PPID:HSP90AA1 interaction. Interacts with S100A6. Interacts with MYB, ILF2, XRCC6, RACK1 and RPS3. Interacts with cytoplasmic dynein 1 intermediate chain (DYNC1I1 or DYNC1I2).

The protein localises to the cytoplasm. It localises to the nucleus. Its subcellular location is the nucleolus. The protein resides in the nucleoplasm. It carries out the reaction [protein]-peptidylproline (omega=180) = [protein]-peptidylproline (omega=0). Its activity is regulated as follows. Less sensitive to inhibition by cyclosporin A than is CYP-18. PPIase that catalyzes the cis-trans isomerization of proline imidic peptide bonds in oligopeptides and may therefore assist protein folding. Proposed to act as a co-chaperone in HSP90 complexes such as in unligated steroid receptors heterocomplexes. Different co-chaperones seem to compete for association with HSP90 thus establishing distinct HSP90-co-chaperone-receptor complexes with the potential to exert tissue-specific receptor activity control. May have a preference for estrogen receptor complexes and is not found in glucocorticoid receptor complexes. May be involved in cytoplasmic dynein-dependent movement of the receptor from the cytoplasm to the nucleus. May regulate MYB by inhibiting its DNA-binding activity. Involved in regulation of AHR signaling by promoting the formation of the AHR:ARNT dimer; the function is independent of HSP90 but requires the chaperone activity region. Involved in regulation of UV radiation-induced apoptosis. This Mus musculus (Mouse) protein is Peptidyl-prolyl cis-trans isomerase D.